The primary structure comprises 262 residues: Electron transfer flavoprotein beta subunit lysine methyltransferase (262 aa).

The N-terminal 38 residues, 1–38 (MALSLGWKAHRNHCGLLLQALRSSGLLLFPCGQCPWRG), are a transit peptide targeting the mitochondrion.

This sequence belongs to the methyltransferase superfamily. ETFBKMT family. Interacts with HSPD1; this protein may possibly be a methylation substrate.

It is found in the cytoplasm. It localises to the mitochondrion matrix. The enzyme catalyses L-lysyl-[protein] + 3 S-adenosyl-L-methionine = N(6),N(6),N(6)-trimethyl-L-lysyl-[protein] + 3 S-adenosyl-L-homocysteine + 3 H(+). Functionally, protein-lysine methyltransferase that selectively trimethylates the flavoprotein ETFB in mitochondria. Thereby, may negatively regulate the function of ETFB in electron transfer from Acyl-CoA dehydrogenases to the main respiratory chain. This is Electron transfer flavoprotein beta subunit lysine methyltransferase from Homo sapiens (Human).